Consider the following 202-residue polypeptide: GPI-anchored hemophore cfmB (202 aa).

The signal sequence occupies residues 1–18 (MHFSRTSLILFAAGLASA). Residues 19-108 (QLPNVPGCSL…STTASETATT (90 aa)) enclose the CFEM domain. 4 disulfides stabilise this stretch: Cys26/Cys67, Cys30/Cys62, Cys40/Cys48, and Cys50/Cys83. Asp45 is a heme binding site. A disordered region spans residues 94 to 171 (PVGAASTTAS…PSSQSTSASA (78 aa)). Residues 97–171 (AASTTASETA…PSSQSTSASA (75 aa)) are compositionally biased toward low complexity. Asn180 carries the GPI-anchor amidated asparagine lipid modification. Residues 181-202 (AGSEKANVAGVVAVAAAALYLL) constitute a propeptide, removed in mature form.

It belongs to the RBT5 family. Post-translationally, the GPI-anchor is attached to the protein in the endoplasmic reticulum and serves to target the protein to the cell surface. There, the glucosamine-inositol phospholipid moiety is cleaved off and the GPI-modified mannoprotein is covalently attached via its lipidless GPI glycan remnant to the 1,6-beta-glucan of the outer cell wall layer.

The protein localises to the secreted. It localises to the cell wall. The protein resides in the cell membrane. Its function is as follows. GPI-anchored cell wall protein involved in stabilizing the cell wall. Not implicated in virulence, heme uptake and biofilm formation. This Aspergillus fumigatus (strain ATCC MYA-4609 / CBS 101355 / FGSC A1100 / Af293) (Neosartorya fumigata) protein is GPI-anchored hemophore cfmB.